The sequence spans 320 residues: Methylenetetrahydrofolate dehydrogenase [NAD(+)] (320 aa).

C152 is a catalytic residue. NAD(+)-binding positions include 187-188 and 210-211; these read RS and DI.

This sequence belongs to the tetrahydrofolate dehydrogenase/cyclohydrolase family. Homodimer.

The protein localises to the cytoplasm. The protein resides in the nucleus. The enzyme catalyses (6R)-5,10-methylene-5,6,7,8-tetrahydrofolate + NAD(+) = (6R)-5,10-methenyltetrahydrofolate + NADH. It participates in one-carbon metabolism; tetrahydrofolate interconversion. Catalyzes oxidation of cytoplasmic one-carbon units for purine biosynthesis. The sequence is that of Methylenetetrahydrofolate dehydrogenase [NAD(+)] (mtd1) from Schizosaccharomyces pombe (strain 972 / ATCC 24843) (Fission yeast).